The following is a 209-amino-acid chain: Eukaryotic translation initiation factor 4E (209 aa).

The protein belongs to the eukaryotic initiation factor 4E family. In terms of assembly, eIF4F is a multi-subunit complex, the composition of which varies with external and internal environmental conditions. It is composed of at least eIF4A, eIF4E and eIF4G. eIF4E is also known to interact with other partners.

Its function is as follows. Recognizes and binds the 7-methylguanosine-containing mRNA cap during an early step in the initiation of protein synthesis and facilitates ribosome binding by inducing the unwinding of the mRNAs secondary structures. The sequence is that of Eukaryotic translation initiation factor 4E (TIF45) from Candida glabrata (strain ATCC 2001 / BCRC 20586 / JCM 3761 / NBRC 0622 / NRRL Y-65 / CBS 138) (Yeast).